The sequence spans 439 residues: FAD-linked oxidoreductase phmC (439 aa).

The first 19 residues, 1-19 (MLSSILLTIFCAFLSSTGA), serve as a signal peptide directing secretion. Residues Asn-29 and Asn-84 are each glycosylated (N-linked (GlcNAc...) asparagine). The FAD-binding PCMH-type domain maps to 89 to 272 (QGSVPSYYIQ…LSTTTRVEPK (184 aa)). Asn-285 and Asn-300 each carry an N-linked (GlcNAc...) asparagine glycan.

The protein belongs to the oxygen-dependent FAD-linked oxidoreductase family. It depends on FAD as a cofactor.

The protein operates within mycotoxin biosynthesis. FAD-linked oxidoreductase; part of the gene cluster that mediates the biosynthesis of the mycotoxins phomacins, leucine-derived cytochalasans with potent actin polymerization-inhibitory activities and monocot-specific antigerminative activities. The first step in the pathway is catalyzed by the hybrid PKS-NRPS phmA, assisted by the enoyl reductase phmE, that are responsible for fusion of the leucine precursor and the polyketide backbone to produce a 2-pyrrolidone intermediate. The polyketide synthase module (PKS) of phmA is responsible for the synthesis of the polyketide backbone and the downstream nonribosomal peptide synthetase (NRPS) amidates the carboxyl end of the polyketide with the leucine precursor. Because phmA lacks a designated enoylreductase (ER) domain, the required activity is provided the enoyl reductase phmE. Reduction by the hydrolyase phmG, followed by dehydration and intra-molecular Diels-Alder cyclization by the Diels-Alderase phmD then yield the required isoindolone-fused macrocycle. A number of oxidative steps catalyzed by the tailoring cytochrome P450 monooxygenase phmB, the FAD-linked oxidoreductase phmC and the short-chain dehydrogenase/reductase phmF, are further required to afford the final products, phomacin D and phomacin E. This is FAD-linked oxidoreductase phmC from Phaeosphaeria nodorum (strain SN15 / ATCC MYA-4574 / FGSC 10173) (Glume blotch fungus).